The chain runs to 507 residues: Rho GTPase-activating protein 19 (507 aa).

Positions 112 to 305 constitute a Rho-GAP domain; the sequence is APLTEEGIAQ…FMIKHSQKLF (194 aa). 3 disordered regions span residues 344–371, 400–419, and 483–507; these read FLKHSKRSRLGSSPSSSTSLQEQTQQHT, KNTPRTPVSDTQVPNGKKHV, and DLQIRKEASSKSKKSHHKSTQETSI. Positions 355 to 369 are enriched in low complexity; that stretch reads SSPSSSTSLQEQTQQ. The span at 400 to 413 shows a compositional bias: polar residues; that stretch reads KNTPRTPVSDTQVP. The span at 483-492 shows a compositional bias: basic and acidic residues; the sequence is DLQIRKEASS.

In terms of biological role, GTPase activator for the Rho-type GTPases by converting them to an inactive GDP-bound state. In Xenopus laevis (African clawed frog), this protein is Rho GTPase-activating protein 19 (arhgap19).